The following is a 547-amino-acid chain: Probable protein kinase UbiB (547 aa).

In terms of domain architecture, Protein kinase spans 121 to 501 (EFSPDPMASA…QLRSERRWRR (381 aa)). Residues 127–135 (MASASVAQV) and lysine 149 contribute to the ATP site. Aspartate 284 (proton acceptor) is an active-site residue. Transmembrane regions (helical) follow at residues 502 to 522 (GFIALVLAGAALVGSQPHAGQ) and 523 to 543 (WLADLPVWSWALLAGAAGVML).

The protein belongs to the ABC1 family. UbiB subfamily.

The protein resides in the cell inner membrane. It functions in the pathway cofactor biosynthesis; ubiquinone biosynthesis [regulation]. Its function is as follows. Is probably a protein kinase regulator of UbiI activity which is involved in aerobic coenzyme Q (ubiquinone) biosynthesis. This is Probable protein kinase UbiB from Marinobacter nauticus (strain ATCC 700491 / DSM 11845 / VT8) (Marinobacter aquaeolei).